The following is a 145-amino-acid chain: Putative pre-16S rRNA nuclease (145 aa).

The protein belongs to the YqgF nuclease family.

Its subcellular location is the cytoplasm. Functionally, could be a nuclease involved in processing of the 5'-end of pre-16S rRNA. The protein is Putative pre-16S rRNA nuclease of Thiobacillus denitrificans (strain ATCC 25259 / T1).